A 606-amino-acid polypeptide reads, in one-letter code: Calmegin (606 aa).

The first 19 residues, 1–19, serve as a signal peptide directing secretion; it reads MRFQGFWLCLGLLFISVNA. Over 20–466 the chain is Lumenal; that stretch reads EFMDDSVEME…QLMSATEQRP (447 aa). Lys124 bears the N6-acetyllysine mark. The cysteines at positions 147 and 181 are disulfide-linked. Residues 255–308 form a disordered region; the sequence is PPINPPKEIEDPTDEKPDDWDERAKIPDASAVKPEDWDESEPPQIVDSSAVKPD. Tandem repeats lie at residues 263 to 276, 280 to 293, 299 to 312, 318 to 331, 335 to 348, 352 to 365, 366 to 379, and 380 to 393. A compositionally biased stretch (acidic residues) spans 265–275; the sequence is DPTDEKPDDWD. Residues 313–346 form an interaction with PPIB region; the sequence is NEPEFIPDPNAEKPFDWNEDMDGEWEAPHISNPA. Cysteines 347 and 351 form a disulfide. The helical transmembrane segment at 467–487 threads the bilayer; sequence WLWFIYLLTAALPIALIGSFC. Topologically, residues 488 to 606 are cytoplasmic; the sequence is WPRKVKKKYE…SVRKRRVRKE (119 aa). The span at 518–544 shows a compositional bias: basic and acidic residues; that stretch reads EVKEEKAALEKPVDLEEEKKQSDGEIV. The interval 518–606 is disordered; the sequence is EVKEEKAALE…SVRKRRVRKE (89 aa). The span at 545 to 567 shows a compositional bias: acidic residues; the sequence is EKEEEGEPEEKSEEEIEIIEGQE. Phosphoserine is present on residues Ser556, Ser572, Ser575, Ser577, Ser587, Ser590, and Ser597. A compositionally biased stretch (basic and acidic residues) spans 568–579; the sequence is EGNKSNKSGSED. A compositionally biased stretch (basic residues) spans 597–606; the sequence is SVRKRRVRKE.

It belongs to the calreticulin family. As to quaternary structure, interacts with PPIB and PDILT. Interacts with ADAM2.

It localises to the endoplasmic reticulum membrane. Its function is as follows. Functions during spermatogenesis as a chaperone for a range of client proteins that are important for sperm adhesion onto the egg zona pellucida and for subsequent penetration of the zona pellucida. Required for normal sperm migration from the uterus into the oviduct. Required for normal male fertility. Binds calcium ions. This chain is Calmegin (CLGN), found in Bos taurus (Bovine).